The following is a 122-amino-acid chain: MNLHAPNAEQDDIEYVDVCAVDDLWDGEMDVFDVGEHEVLLVKHEGRFHAYDGICPHQSVSLVEGHLTEDGVLICKAHEWQFSVEGGQGINPANVCLQSFPLKVEGGRVLIGTEPLPKEGEA.

A Rieske domain is found at 16–111 (VDVCAVDDLW…LKVEGGRVLI (96 aa)). [2Fe-2S] cluster contacts are provided by C55, H57, C75, and H78.

It belongs to the bacterial ring-hydroxylating dioxygenase ferredoxin component family. Homodimer. The alkene monooxygenase multicomponent enzyme system is composed of an electron transfer component and a monooxygenase component interacting with the effector protein XamoD. The electron transfer component is composed of a ferredoxin reductase (XamoF) and a ferredoxin (XamoC), and the monooxygenase component is formed by a heterohexamer (dimer of heterotrimers) of two alpha subunits (XamoA), two beta subunits (XamoE) and two gamma subunits (XamoB). [2Fe-2S] cluster serves as cofactor.

The protein localises to the cytoplasm. Its function is as follows. Ferredoxin component of the alkene monooxygenase multicomponent enzyme system which catalyzes the O2- and NADH-dependent epoxidation of short chain (C2 to C6) alkenes to their corresponding epoxides. Functions as an intermediate electron transfer protein. The sequence is that of Alkene monooxygenase system, ferredoxin component from Xanthobacter autotrophicus (strain ATCC BAA-1158 / Py2).